The following is a 77-amino-acid chain: UPF0291 protein EAT1b_0405 (77 aa).

The interval 53–77 (KVVDPDGNDVTPEKLKEDQKRYRGE) is disordered. Positions 63–77 (TPEKLKEDQKRYRGE) are enriched in basic and acidic residues.

It belongs to the UPF0291 family.

The protein resides in the cytoplasm. The protein is UPF0291 protein EAT1b_0405 of Exiguobacterium sp. (strain ATCC BAA-1283 / AT1b).